A 262-amino-acid chain; its full sequence is Adenosylcobinamide-GDP ribazoletransferase (262 aa).

6 consecutive transmembrane segments (helical) span residues 43 to 63 (YFGL…WLTQ), 66 to 86 (LPAG…TGGF), 120 to 140 (GALA…ELAL), 146 to 166 (AGSA…SLIF), 191 to 211 (LFIL…IAAL), and 242 to 262 (AAQQ…GSIL).

Belongs to the CobS family. It depends on Mg(2+) as a cofactor.

It is found in the cell inner membrane. It carries out the reaction alpha-ribazole + adenosylcob(III)inamide-GDP = adenosylcob(III)alamin + GMP + H(+). It catalyses the reaction alpha-ribazole 5'-phosphate + adenosylcob(III)inamide-GDP = adenosylcob(III)alamin 5'-phosphate + GMP + H(+). It functions in the pathway cofactor biosynthesis; adenosylcobalamin biosynthesis; adenosylcobalamin from cob(II)yrinate a,c-diamide: step 7/7. In terms of biological role, joins adenosylcobinamide-GDP and alpha-ribazole to generate adenosylcobalamin (Ado-cobalamin). Also synthesizes adenosylcobalamin 5'-phosphate from adenosylcobinamide-GDP and alpha-ribazole 5'-phosphate. In Shewanella sp. (strain ANA-3), this protein is Adenosylcobinamide-GDP ribazoletransferase.